Consider the following 424-residue polypeptide: Tyrosine--tRNA ligase (424 aa).

Y33 contacts L-tyrosine. Positions 38–47 match the 'HIGH' region motif; sequence PSADSLHIGH. Residues Y170 and Q174 each contribute to the L-tyrosine site. A 'KMSKS' region motif is present at residues 230-234; it reads KFGKT. ATP is bound at residue K233. The region spanning 357-424 is the S4 RNA-binding domain; that stretch reads MSLIDALVRC…RRHYHLIRLV (68 aa).

Belongs to the class-I aminoacyl-tRNA synthetase family. TyrS type 1 subfamily. Homodimer.

It localises to the cytoplasm. The enzyme catalyses tRNA(Tyr) + L-tyrosine + ATP = L-tyrosyl-tRNA(Tyr) + AMP + diphosphate + H(+). Catalyzes the attachment of tyrosine to tRNA(Tyr) in a two-step reaction: tyrosine is first activated by ATP to form Tyr-AMP and then transferred to the acceptor end of tRNA(Tyr). In Roseiflexus castenholzii (strain DSM 13941 / HLO8), this protein is Tyrosine--tRNA ligase.